A 430-amino-acid polypeptide reads, in one-letter code: MELLKALLLLSGVFGALAEFCVIPRIDSQLVEKLGQRLLPWMDRLSSEQLNPSVFVGLRLSSMQAGTKEDLYLHSLKIHYQQCLLRSTSSDDNSSCQPKLSGGSLALYLLALRANCEFFGSRKGDRLISQLKWFLEDEKKAIGHNHEGHPNTNYYQYGLSILALCVHQKRLHDSVVGKLLYAVEHDYFTYQGHVSVDTEAMAGLALTCLERFNFNSDLRPRITMAIETVREKILKSQAPEGYFGNIYSTPLALQMLMTSPASGVGLGTACIKAGTSLLLSLQDGAFQNPLMISQLLPILNHKTYLDLIFPDCQASRVMLVPAVEDPVHISEVISVTLKVASALSPYEQTFFVFAGSSLEDVLKLAQDGGGFTYGTQASLSGPYLTSVLGKDAGDREYWQLLRAPDTPLLQGIADYKPQDGETIELRLVRW.

The N-terminal stretch at 1–18 is a signal peptide; sequence MELLKALLLLSGVFGALA. 3 cysteine pairs are disulfide-bonded: Cys21/Cys270, Cys116/Cys312, and Cys165/Cys208. Cob(II)alamin is bound by residues 152–156, His193, 193–197, Asn245, Ser248, Gln294, and 398–400; these read TNYYQ, HVSVD, and WQL.

This sequence belongs to the eukaryotic cobalamin transport proteins family. As to quaternary structure, interacts with CD320 (via LDL-receptor class A domains).

It is found in the secreted. Functionally, primary vitamin B12-binding and transport protein. Delivers cobalamin to cells. This chain is Transcobalamin-2 (Tcn2), found in Mus musculus (Mouse).